The primary structure comprises 268 residues: TATA-box-binding protein (268 aa).

A compositionally biased stretch (polar residues) spans 1 to 24 (MDSLTTHPATAQQARAFTSPSSLS). A disordered region spans residues 1–86 (MDSLTTHPAT…TPAATPGASA (86 aa)). The segment covering 50-86 (NGQSANGNVNGQQQGANAANGNGVMPATPAATPGASA) has biased composition (low complexity). Tandem repeats lie at residues 95 to 171 (LQNI…ARII) and 185 to 262 (IQNI…YPVL).

The protein belongs to the TBP family. Belongs to the TFIID complex together with the TBP-associated factors (TAFs). Binds DNA as monomer.

Its subcellular location is the nucleus. Its function is as follows. General transcription factor that functions at the core of the DNA-binding multiprotein factor TFIID. Binding of TFIID to the TATA box is the initial transcriptional step of the pre-initiation complex (PIC), playing a role in the activation of eukaryotic genes transcribed by RNA polymerase II. This Emericella nidulans (strain FGSC A4 / ATCC 38163 / CBS 112.46 / NRRL 194 / M139) (Aspergillus nidulans) protein is TATA-box-binding protein (tbpA).